The following is a 118-amino-acid chain: MQAKAILRHTPTSPRKMRLLAGLVRGKPVDQAKAILLNSTKGASRNVMLTLKSAVANYAQLNPDERVSDQELVVKEVFVDQGATLKRMLPAPMGRAYRVRKRSNHLTVIVDKVKQSSK.

Belongs to the universal ribosomal protein uL22 family. As to quaternary structure, part of the 50S ribosomal subunit.

This protein binds specifically to 23S rRNA; its binding is stimulated by other ribosomal proteins, e.g. L4, L17, and L20. It is important during the early stages of 50S assembly. It makes multiple contacts with different domains of the 23S rRNA in the assembled 50S subunit and ribosome. Its function is as follows. The globular domain of the protein is located near the polypeptide exit tunnel on the outside of the subunit, while an extended beta-hairpin is found that lines the wall of the exit tunnel in the center of the 70S ribosome. This chain is Large ribosomal subunit protein uL22, found in Chlorobium limicola (strain DSM 245 / NBRC 103803 / 6330).